The primary structure comprises 1227 residues: Methionine synthase (1227 aa).

Positions 2-325 (SSKVEQLRAQ…QHIAAMSRAV (324 aa)) constitute a Hcy-binding domain. Zn(2+)-binding residues include Cys247, Cys310, and Cys311. Positions 356 to 617 (FVNVGERTNV…LPAELRDAVE (262 aa)) constitute a Pterin-binding domain. The region spanning 650–744 (QQAEWRSWEV…FIEASKEQGK (95 aa)) is the B12-binding N-terminal domain. Methylcob(III)alamin contacts are provided by residues Glu694, 756-760 (GDVHD), His759, Ser804, Thr808, and Ala860. A B12-binding domain is found at 746–881 (NGKMVIATVK…SDTQRDDFVA (136 aa)). The region spanning 897–1227 (KKPRTPPVTL…LAPNLGYDAD (331 aa)) is the AdoMet activation domain. S-adenosyl-L-methionine-binding positions include Asp946, Arg1134, and 1189-1190 (YY).

It belongs to the vitamin-B12 dependent methionine synthase family. It depends on methylcob(III)alamin as a cofactor. Zn(2+) serves as cofactor.

The enzyme catalyses (6S)-5-methyl-5,6,7,8-tetrahydrofolate + L-homocysteine = (6S)-5,6,7,8-tetrahydrofolate + L-methionine. It participates in amino-acid biosynthesis; L-methionine biosynthesis via de novo pathway; L-methionine from L-homocysteine (MetH route): step 1/1. Catalyzes the transfer of a methyl group from methyl-cobalamin to homocysteine, yielding enzyme-bound cob(I)alamin and methionine. Subsequently, remethylates the cofactor using methyltetrahydrofolate. This Escherichia coli (strain K12) protein is Methionine synthase (metH).